Reading from the N-terminus, the 122-residue chain is UPF0382 membrane protein SH2409 (122 aa).

4 helical membrane passes run 3 to 23 (LFIILGALCTMMSVGTGAFGA), 46 to 66 (MYHGLGLIIIGVISGTTSINV), 69 to 89 (AGWLLFLGVVFFSGSLYILAL), and 98 to 118 (ITPIGGLLFIAGWLMLIISTF).

Belongs to the UPF0382 family.

It localises to the cell membrane. The sequence is that of UPF0382 membrane protein SH2409 from Staphylococcus haemolyticus (strain JCSC1435).